A 575-amino-acid polypeptide reads, in one-letter code: Glycine--tRNA ligase (575 aa).

Substrate-binding residues include Arg-96 and Glu-162. ATP-binding positions include 194–196 (RNE), 204–209 (IRLREF), 327–328 (EC), and 450–453 (GIDR). 209-213 (FTQAE) contributes to the substrate binding site. 446-450 (EPSYG) provides a ligand contact to substrate.

Belongs to the class-II aminoacyl-tRNA synthetase family.

Its subcellular location is the cytoplasm. The enzyme catalyses tRNA(Gly) + glycine + ATP = glycyl-tRNA(Gly) + AMP + diphosphate. Its function is as follows. Catalyzes the attachment of glycine to tRNA(Gly). This is Glycine--tRNA ligase from Methanococcus maripaludis (strain C5 / ATCC BAA-1333).